We begin with the raw amino-acid sequence, 224 residues long: UPF0758 protein NE1464 (224 aa).

An MPN domain is found at 102 to 224 (IMDSPQSVRN…VVSFAERGLI (123 aa)). Zn(2+)-binding residues include His173, His175, and Asp186. The short motif at 173–186 (HNHPSGIAEPSTAD) is the JAMM motif element.

Belongs to the UPF0758 family.

This Nitrosomonas europaea (strain ATCC 19718 / CIP 103999 / KCTC 2705 / NBRC 14298) protein is UPF0758 protein NE1464.